We begin with the raw amino-acid sequence, 320 residues long: Putative protein FRMPD2-like (320 aa).

2 consecutive PDZ domains span residues 1–46 (MTSI…ERRV) and 90–178 (EVKL…CRPP). Positions 215–239 (DQEDSWRDSASPDAGEGLGLRPESS) are disordered.

The polypeptide is Putative protein FRMPD2-like (Homo sapiens (Human)).